The chain runs to 160 residues: Ribosomal RNA large subunit methyltransferase H (160 aa).

Residues leucine 76, glycine 108, and 127–132 contribute to the S-adenosyl-L-methionine site; that span reads FGFMTW.

Belongs to the RNA methyltransferase RlmH family. As to quaternary structure, homodimer.

The protein resides in the cytoplasm. The enzyme catalyses pseudouridine(1915) in 23S rRNA + S-adenosyl-L-methionine = N(3)-methylpseudouridine(1915) in 23S rRNA + S-adenosyl-L-homocysteine + H(+). In terms of biological role, specifically methylates the pseudouridine at position 1915 (m3Psi1915) in 23S rRNA. The sequence is that of Ribosomal RNA large subunit methyltransferase H from Bartonella tribocorum (strain CIP 105476 / IBS 506).